The chain runs to 29 residues: Toxin II.9 (29 aa).

Positions K2–E29 constitute an LCN-type CS-alpha/beta domain.

This sequence belongs to the long (4 C-C) scorpion toxin superfamily. Sodium channel inhibitor family. Beta subfamily. As to expression, expressed by the venom gland.

Its subcellular location is the secreted. Its function is as follows. Binds to sodium channels (Nav) and shift the voltage of activation toward more negative potentials. This toxin is active on crustaceans. The chain is Toxin II.9 from Centruroides limpidus (Mexican scorpion).